A 202-amino-acid chain; its full sequence is ATP-dependent dethiobiotin synthetase BioD (202 aa).

An ATP-binding site is contributed by 12-17 (GIGKTI). Thr-16 provides a ligand contact to Mg(2+). Lys-32 is an active-site residue. Ser-36 serves as a coordination point for substrate. Residues Asp-43, 94-97 (EGAG), and 178-180 (PVV) each bind ATP. Residues Asp-43 and Glu-94 each contribute to the Mg(2+) site.

This sequence belongs to the dethiobiotin synthetase family. In terms of assembly, homodimer. It depends on Mg(2+) as a cofactor.

It localises to the cytoplasm. The enzyme catalyses (7R,8S)-7,8-diammoniononanoate + CO2 + ATP = (4R,5S)-dethiobiotin + ADP + phosphate + 3 H(+). It participates in cofactor biosynthesis; biotin biosynthesis; biotin from 7,8-diaminononanoate: step 1/2. Functionally, catalyzes a mechanistically unusual reaction, the ATP-dependent insertion of CO2 between the N7 and N8 nitrogen atoms of 7,8-diaminopelargonic acid (DAPA, also called 7,8-diammoniononanoate) to form a ureido ring. The sequence is that of ATP-dependent dethiobiotin synthetase BioD from Sphingopyxis alaskensis (strain DSM 13593 / LMG 18877 / RB2256) (Sphingomonas alaskensis).